Consider the following 318-residue polypeptide: MARKKIALIGGGQIGGVLAQLSALRELGDVVLFDIVEGLPQGKTLDIAEASPVDNFDAALTGANDYADIKGADIVIVTAGLPRKPGMSRDDLIATNAKIMQSVSEGIKQYAPNSFVIVISNPLDAMVTLCQKITGFPSSRVMGMAGVLDSARFAAFIAWELGVSVKDVNAMVLGGHGDTMVPIIRYANVNGVPVMELIERKYNGDKAKAKEVMAALVKRTQGAGGEVVGLLKTGSAFYSPASSAIAMAEAILRDQKRLLPVCALLNGEFGVKGYYVGVPCILGANGIEKIVEFSLDAEEQAMFDNSVAAVKELVDSMK.

NAD(+) is bound by residues 10 to 15 (GGGQIG) and aspartate 34. The substrate site is built by arginine 83 and arginine 89. NAD(+) contacts are provided by residues asparagine 96 and 119-121 (ISN). Residues asparagine 121 and arginine 152 each contribute to the substrate site. The active-site Proton acceptor is the histidine 176.

It belongs to the LDH/MDH superfamily. MDH type 3 family.

The enzyme catalyses (S)-malate + NAD(+) = oxaloacetate + NADH + H(+). In terms of biological role, catalyzes the reversible oxidation of malate to oxaloacetate. The chain is Malate dehydrogenase from Geotalea daltonii (strain DSM 22248 / JCM 15807 / FRC-32) (Geobacter daltonii).